A 299-amino-acid chain; its full sequence is Superkiller complex protein 8 (299 aa).

WD repeat units follow at residues 11–48 (AHEDGIWCVKWQGDIIATGGMGTKVKTWHGNQPQFLTE), 54–93 (KHILGVTSLDIDIGARYLATGGMDGTVRLFDLSTNTLHKT), 96–135 (SGPLGCLKIGFLNSANNLVSVSESGNISIYSVETGEKLRS), 138–177 (NTNKQVLTMAISPNNEQIAVAGLDGTVLCYDVESGRRVSE), 180–219 (AHGVPIRSLCFSSDSKTIFTGAEDSQIRLHDPNSSNPYIA), 223–263 (GHSS…LDSS), and 266–299 (AHADQTWDLAFSPDSTKLVSVSDDCSIHSYALKQ).

The protein belongs to the SKI8 family.

This is Superkiller complex protein 8 (skic8) from Dictyostelium discoideum (Social amoeba).